Consider the following 351-residue polypeptide: Cytoplasmic dynein 2 light intermediate chain 1 (351 aa).

Residues 304-351 (TLKDVKDPAKDPQYAESEVDEMRIQKDQELEQYKRSSSKSWKQIELDS) form a disordered region. Residues 323–337 (DEMRIQKDQELEQYK) are compositionally biased toward basic and acidic residues.

It belongs to the dynein light intermediate chain family. As to quaternary structure, light intermediate chain of the cytoplasmic dynein complex 2, a multisubunit complex composed at least of eleven different proteins. The cytoplasmic dynein 2 complex consists of two catalytic heavy chains (HCs) and a number of non-catalytic subunits presented by intermediate chains (ICs), light intermediate chains (LICs) and light chains (LCs). Among them, a heavy chain (DYNC2H1), two intermediate chains (DYNC2I2 and DYNC2I1), a light intermediate chain (DYNC2LI1), and a light chain (DYNLT2B) are unique to the dynein-2 complex, but a subset of light chains are also shared by dynein-1 and dynein-2 complexes. Dynein-2 complex is built around two copies of cytoplasmic dynein 2 heavy chain 1 (DYNC2H1). The C-terminal region forms the motor domain, which converts the energy from ATP hydrolysis into movement. Its N-terminal region forms the tail, an extended structure that binds the other subunits and holds the two heavy chains in a homodimer. Interacts with DYNC2H1 (via N-terminus); this interaction stabilizes the dynein-2 complex structure.

The protein resides in the cytoplasm. It localises to the cell projection. It is found in the cilium. Its subcellular location is the cytoskeleton. The protein localises to the cilium basal body. The protein resides in the cilium axoneme. It localises to the microtubule organizing center. It is found in the centrosome. Acts as one of several non-catalytic accessory components of the cytoplasmic dynein 2 complex (dynein-2 complex), a motor protein complex that drives the movement of cargos along microtubules within cilia and flagella in concert with the intraflagellar transport (IFT) system, facilitating the assembly of these organelles. Involved in the regulation of ciliary length. The sequence is that of Cytoplasmic dynein 2 light intermediate chain 1 (DYNC2LI1) from Bos taurus (Bovine).